Reading from the N-terminus, the 447-residue chain is Flagellum-specific ATP synthase (447 aa).

Ser167–Ser174 is a binding site for ATP.

Belongs to the ATPase alpha/beta chains family.

Its subcellular location is the cytoplasm. It carries out the reaction ATP + H2O + 4 H(+)(in) = ADP + phosphate + 5 H(+)(out). Probable catalytic subunit of a protein translocase for flagellum-specific export, or a proton translocase involved in local circuits at the flagellum. The sequence is that of Flagellum-specific ATP synthase (fliI) from Treponema pallidum (strain Nichols).